The following is a 318-amino-acid chain: Beta-ketoacyl-[acyl-carrier-protein] synthase III (318 aa).

Active-site residues include cysteine 112 and histidine 245. The interval 246–250 (QANIR) is ACP-binding. The active site involves asparagine 275.

It belongs to the thiolase-like superfamily. FabH family. Homodimer.

Its subcellular location is the cytoplasm. It catalyses the reaction malonyl-[ACP] + acetyl-CoA + H(+) = 3-oxobutanoyl-[ACP] + CO2 + CoA. The protein operates within lipid metabolism; fatty acid biosynthesis. Catalyzes the condensation reaction of fatty acid synthesis by the addition to an acyl acceptor of two carbons from malonyl-ACP. Catalyzes the first condensation reaction which initiates fatty acid synthesis and may therefore play a role in governing the total rate of fatty acid production. Possesses both acetoacetyl-ACP synthase and acetyl transacylase activities. Its substrate specificity determines the biosynthesis of branched-chain and/or straight-chain of fatty acids. This chain is Beta-ketoacyl-[acyl-carrier-protein] synthase III, found in Rickettsia conorii (strain ATCC VR-613 / Malish 7).